The sequence spans 710 residues: Polyribonucleotide nucleotidyltransferase (710 aa).

The Mg(2+) site is built by Asp-486 and Asp-492. Residues 553–612 (PRFETIKIHPDKIRDIIGKGGATIRSITEETNSSIDIDDDGTVKVYADDNEALQAALNRI) enclose the KH domain. An S1 motif domain is found at 622 to 690 (GAIYEGTVVR…QRGRIKLSIK (69 aa)).

It belongs to the polyribonucleotide nucleotidyltransferase family. As to quaternary structure, component of the RNA degradosome, which is a multiprotein complex involved in RNA processing and mRNA degradation. It depends on Mg(2+) as a cofactor.

The protein localises to the cytoplasm. It carries out the reaction RNA(n+1) + phosphate = RNA(n) + a ribonucleoside 5'-diphosphate. In terms of biological role, involved in mRNA degradation. Catalyzes the phosphorolysis of single-stranded polyribonucleotides processively in the 3'- to 5'-direction. The protein is Polyribonucleotide nucleotidyltransferase of Cellvibrio japonicus (strain Ueda107) (Pseudomonas fluorescens subsp. cellulosa).